A 411-amino-acid chain; its full sequence is ATP phosphoribosyltransferase 1, chloroplastic (411 aa).

Polar residues predominate over residues 1-12 (MSLLLPTNLQQY). Residues 1–27 (MSLLLPTNLQQYPSSSSFPSSTPILSP) are disordered. Residues 1 to 49 (MSLLLPTNLQQYPSSSSFPSSTPILSPPPSTAFSVIVPRRRCLRLVTSC) constitute a chloroplast transit peptide. Over residues 13-24 (PSSSSFPSSTPI) the composition is skewed to low complexity. Val50 carries the N-acetylvaline modification.

This sequence belongs to the ATP phosphoribosyltransferase family. Long subfamily. It depends on Mg(2+) as a cofactor. Expressed in leaves and at lower levels in roots (at protein level).

It localises to the plastid. The protein localises to the chloroplast. It carries out the reaction 1-(5-phospho-beta-D-ribosyl)-ATP + diphosphate = 5-phospho-alpha-D-ribose 1-diphosphate + ATP. It functions in the pathway amino-acid biosynthesis; L-histidine biosynthesis; L-histidine from 5-phospho-alpha-D-ribose 1-diphosphate: step 1/9. Its activity is regulated as follows. Feedback inhibited by L-histidine. Functionally, catalyzes the condensation of ATP and 5-phosphoribose 1-diphosphate to form N'-(5'-phosphoribosyl)-ATP (PR-ATP). In Arabidopsis thaliana (Mouse-ear cress), this protein is ATP phosphoribosyltransferase 1, chloroplastic (HISN1A).